Here is an 820-residue protein sequence, read N- to C-terminus: MRYDPSLIEKKWQEFWKEHKSFEADEASDKPKYYVLDMFPYPSGAGLHVGHLIGYTATDIVARYKRAKGYAVLHPMGWDSFGLPAEQYAVRTGTHPRETTQKNIENFRKQLSAMGFSYDEGREFATSDPDYYRWTQKLFLFLYEKGLAYMADMAVNYCPELGTVLSNEEVENGLSVEGGYPVERRMLRQWILRITAYSDQLLEGLEDLDWPENVKQLQRNWIGKSEGALVRFEVNNERFLEVFTTRPDTIGGVSFLVVAPEHPEVNRLISENQREAVESYIRAAQSKSERDRISETKVKTGVFTGTYAKHPVTGADIPIWISDYVILGYGSGVVMGVPAHDERDREFAEAFSLPIYEVLDKDECCIHSNHGDFLLDGLAGQEARDYVIAYLQKKNLGEAKVAYKLRDWLFSRQRYWGEPIPIIHFEDGTCRPLEDDELPLLPPEIQDYRPEGFGQGPLAKVKEWVDIHDTKTNRRGRRETHTMPQWAGSCWYYLRFCDAHNSQAPWSNENERYWMPVDLYIGGAEHAVLHLLYSRFWHRVFYEAGMVSTAEPFKKLINQGLVLATSYRIPGKGYVYPEDAREDNGVWMSASGEELEVRQEKMSKSKLNGVDPQILIDEFGADALRMYAMFSGPLDKNKLWSNQGVSGCRRFLNRFYEMATSASVQDVDDPKGMALAHRLVHRVGEDIEKMSLNTIPSSFMEFINEFVKLDIYPRSALAMVVQALAPIAPHISEELWTVLGYAPGIDAAGWPKVDPKYLEDTSVTFVIQVNGKLRARLDMDKATSKEDVLSLAREAVAKYLEGKEVKKEVFVPNRLVNFVL.

Residues 40–51 (PYPSGAGLHVGH) carry the 'HIGH' region motif. Residues 601 to 605 (KMSKS) carry the 'KMSKS' region motif. Residue Lys-604 coordinates ATP.

This sequence belongs to the class-I aminoacyl-tRNA synthetase family.

It is found in the cytoplasm. It carries out the reaction tRNA(Leu) + L-leucine + ATP = L-leucyl-tRNA(Leu) + AMP + diphosphate. The protein is Leucine--tRNA ligase of Chlamydia caviae (strain ATCC VR-813 / DSM 19441 / 03DC25 / GPIC) (Chlamydophila caviae).